The primary structure comprises 178 residues: Nucleoside-triphosphatase THEP1 (178 aa).

Residues 9 to 16 (GPVGSIKA) and 101 to 108 (VIIIDEVG) each bind ATP.

It belongs to the THEP1 NTPase family.

It carries out the reaction a ribonucleoside 5'-triphosphate + H2O = a ribonucleoside 5'-diphosphate + phosphate + H(+). Its function is as follows. Has nucleotide phosphatase activity towards ATP, GTP, CTP, TTP and UTP. May hydrolyze nucleoside diphosphates with lower efficiency. The sequence is that of Nucleoside-triphosphatase THEP1 from Thermoplasma volcanium (strain ATCC 51530 / DSM 4299 / JCM 9571 / NBRC 15438 / GSS1).